The sequence spans 68 residues: Large ribosomal subunit protein uL29 (68 aa).

This sequence belongs to the universal ribosomal protein uL29 family.

The protein is Large ribosomal subunit protein uL29 of Rhodospirillum rubrum (strain ATCC 11170 / ATH 1.1.1 / DSM 467 / LMG 4362 / NCIMB 8255 / S1).